The chain runs to 480 residues: Uridine/deoxyuridine transporter (480 aa).

14 consecutive transmembrane segments (helical) span residues 14 to 34, 55 to 75, 93 to 113, 115 to 135, 147 to 167, 174 to 194, 207 to 227, 239 to 259, 280 to 300, 320 to 340, 358 to 378, 382 to 402, 417 to 437, and 449 to 469; these read VGSI…FQLN, SIAL…LFLP, LTMI…LMIG, ILQG…HVKV, ILTS…GWLV, SVFF…SFGT, WTGV…VNAL, WLLA…FWQV, GLLI…NGII, LVTL…SGFL, IIGI…LLLL, FIGI…GIVL, GMFN…PTVL, and ISGI…SFLI.

It belongs to the major facilitator superfamily. EmrB family.

Its subcellular location is the cell membrane. In terms of biological role, responsible for the uptake of uridine and deoxyuridine. Not involved in purine nucleoside uptake. This Lactococcus lactis subsp. cremoris (strain MG1363) protein is Uridine/deoxyuridine transporter.